A 178-amino-acid chain; its full sequence is Inner membrane-spanning protein YciB (178 aa).

5 helical membrane passes run 22-42 (IFWA…YSWY), 50-70 (MTLV…YFHN), 76-96 (WKVT…QWVM), 121-141 (IAWA…AFWL), and 149-169 (FKVF…GVYI).

This sequence belongs to the YciB family.

The protein localises to the cell inner membrane. Plays a role in cell envelope biogenesis, maintenance of cell envelope integrity and membrane homeostasis. The chain is Inner membrane-spanning protein YciB from Cronobacter sakazakii (strain ATCC BAA-894) (Enterobacter sakazakii).